The sequence spans 404 residues: Alanine racemase (404 aa).

Lysine 34 (proton acceptor; specific for D-alanine) is an active-site residue. At lysine 34 the chain carries N6-(pyridoxal phosphate)lysine. A substrate-binding site is contributed by arginine 133. The 48-residue stretch at 226-273 folds into the RPE1 insert domain; that stretch reads EVSSNLSYTEEFESNTAALTTTACINKCPDVSVRLTPKLPLKGSYTVR. Catalysis depends on tyrosine 298, which acts as the Proton acceptor; specific for L-alanine. A substrate-binding site is contributed by methionine 346.

The protein belongs to the alanine racemase family. Pyridoxal 5'-phosphate serves as cofactor.

It carries out the reaction L-alanine = D-alanine. It participates in amino-acid biosynthesis; D-alanine biosynthesis; D-alanine from L-alanine: step 1/1. Its function is as follows. Catalyzes the interconversion of L-alanine and D-alanine. May also act on other amino acids. This chain is Alanine racemase (alr), found in Rickettsia prowazekii (strain Madrid E).